The following is a 285-amino-acid chain: Probable endonuclease 4 (285 aa).

9 residues coordinate Zn(2+): histidine 69, histidine 109, glutamate 145, aspartate 179, histidine 182, histidine 216, aspartate 229, histidine 231, and glutamate 261.

The protein belongs to the AP endonuclease 2 family. Zn(2+) is required as a cofactor.

It carries out the reaction Endonucleolytic cleavage to 5'-phosphooligonucleotide end-products.. Endonuclease IV plays a role in DNA repair. It cleaves phosphodiester bonds at apurinic or apyrimidinic (AP) sites, generating a 3'-hydroxyl group and a 5'-terminal sugar phosphate. The chain is Probable endonuclease 4 from Escherichia coli (strain SMS-3-5 / SECEC).